We begin with the raw amino-acid sequence, 445 residues long: Scarecrow-like protein 18 (445 aa).

Residues 1 to 21 show a composition bias toward low complexity; the sequence is MLTSFKSSSSSSEDATATTTE. Residues 1-26 are disordered; the sequence is MLTSFKSSSSSSEDATATTTENPPPL. The region spanning 32–445 is the GRAS domain; the sequence is SAATSASHHL…RPLFSVSSWK (414 aa). Residues 39–127 form a leucine repeat I (LRI) region; sequence HHLRRLLFTA…STVFTSSVCK (89 aa). The tract at residues 146 to 217 is VHIID; sequence YLWLNQLTPF…SPPPSLRITG (72 aa). A VHIID motif is present at residues 179–183; it reads LHILD. Residues 227-259 form a leucine repeat II (LRII) region; that stretch reads RTGDRLTRFADSLGLQFQFHTLVIVEEDLAGLL. The tract at residues 275–366 is PFYRE; sequence IAVNCVHFLH…QRWFGKEILD (92 aa). Positions 369-445 are SAW; sequence AAEETERKQR…RPLFSVSSWK (77 aa).

This sequence belongs to the GRAS family. Expressed in roots and flowers.

Its subcellular location is the nucleus. Its function is as follows. Probable transcription factor required for axillary (lateral) shoot meristem formation during vegetative development. Seems to act upstream of REVOLUTA. The chain is Scarecrow-like protein 18 (SCL18) from Arabidopsis thaliana (Mouse-ear cress).